A 404-amino-acid polypeptide reads, in one-letter code: Cystinosin homolog (404 aa).

Residues 20–123 (TNNLVVRQKE…FARITVIRSH (104 aa)) lie on the Lumenal side of the membrane. Residues asparagine 46, asparagine 53, asparagine 79, and asparagine 97 are each glycosylated (N-linked (GlcNAc...) asparagine). Residues 124–144 (FLAILIQIVGWTYFFAWSISF) form a helical membrane-spanning segment. The region spanning 125-191 (LAILIQIVGW…MYYNSHVKNE (67 aa)) is the PQ-loop 1 domain. The Cytoplasmic segment spans residues 145-163 (YPQMYLNFKRKSVVGLNFD). The chain crosses the membrane as a helical span at residues 164 to 184 (FLSLNLVGFCAYAIFNLLMYY). Over 185-207 (NSHVKNEYNIVNPRSPPPVLLND) the chain is Lumenal. A helical transmembrane segment spans residues 208-228 (VVFAVHAFLACFITILQCLFY). Residues 229–238 (ERDNQSVSSK) lie on the Cytoplasmic side of the membrane. The helical transmembrane segment at 239-259 (CIALMIVLISFGFCSAAATVL) threads the bilayer. Residues 260–263 (RKIQ) are Lumenal-facing. The chain crosses the membrane as a helical span at residues 264 to 285 (LLSFVTSLSYIKMAVTCCKYFP). One can recognise a PQ-loop 2 domain in the interval 266-327 (SFVTSLSYIK…MILQAVNVND (62 aa)). At 286–295 (QAYFNYTRKS) the chain is on the cytoplasmic side. A helical transmembrane segment spans residues 296-316 (TVGWSIGNIMLDFTGGTLDIL). The Lumenal segment spans residues 317–337 (QMILQAVNVNDWSAFYANPVK). The chain crosses the membrane as a helical span at residues 338–358 (FGLGFVSIFFDIIFMVQHYVL). The Cytoplasmic segment spans residues 359–404 (YPNAEVPHNEYHGVDNPNPDNIARDAEQYAGDSESMESTEPIIVHD).

This sequence belongs to the cystinosin family.

It localises to the lysosome membrane. Its subcellular location is the cytoplasmic vesicle. The protein resides in the phagosome. It catalyses the reaction L-cystine(out) + H(+)(out) = L-cystine(in) + H(+)(in). Its function is as follows. Cystine/H(+) symporter that mediates export of cystine, the oxidized dimer of cysteine, from lysosomes. May play a role in the degradation of engulfed apoptotic cells. The chain is Cystinosin homolog (ctns-1) from Caenorhabditis elegans.